Here is a 534-residue protein sequence, read N- to C-terminus: CD276 antigen (534 aa).

The signal sequence occupies residues M1–A28. The region spanning L29 to A139 is the Ig-like V-type 1 domain. Topologically, residues L29–A466 are extracellular. 4 disulfide bridges follow: C50–C122, C165–C220, C268–C340, and C383–C438. 6 N-linked (GlcNAc...) asparagine glycosylation sites follow: N104, N189, N215, N322, N407, and N433. The Ig-like C2-type 1 domain maps to P145–T238. The region spanning P243–A357 is the Ig-like V-type 2 domain. Residues P363 to T456 form the Ig-like C2-type 2 domain. Residues L467–V487 traverse the membrane as a helical segment. Topologically, residues C488 to A534 are cytoplasmic. Residues E498–G510 are compositionally biased toward acidic residues. Residues E498–A534 form a disordered region. S525 is subject to Phosphoserine.

Belongs to the immunoglobulin superfamily. BTN/MOG family. In terms of assembly, interacts with TREML2 and this interaction enhances T-cell activation. In terms of tissue distribution, ubiquitous but not detectable in peripheral blood lymphocytes or granulocytes. Weakly expressed in resting monocytes. Expressed in dendritic cells derived from monocytes. Expressed in epithelial cells of sinonasal tissue. Expressed in extravillous trophoblast cells and Hofbauer cells of the first trimester placenta and term placenta.

Its subcellular location is the membrane. May participate in the regulation of T-cell-mediated immune response. May play a protective role in tumor cells by inhibiting natural-killer mediated cell lysis as well as a role of marker for detection of neuroblastoma cells. May be involved in the development of acute and chronic transplant rejection and in the regulation of lymphocytic activity at mucosal surfaces. Could also play a key role in providing the placenta and fetus with a suitable immunological environment throughout pregnancy. Both isoform 1 and isoform 2 appear to be redundant in their ability to modulate CD4 T-cell responses. Isoform 2 is shown to enhance the induction of cytotoxic T-cells and selectively stimulates interferon gamma production in the presence of T-cell receptor signaling. The chain is CD276 antigen (CD276) from Homo sapiens (Human).